A 635-amino-acid chain; its full sequence is Threonine--tRNA ligase (635 aa).

Positions Met1–Thr61 constitute a TGS domain. The catalytic stretch occupies residues Asp242–Pro533. 3 residues coordinate Zn(2+): Cys333, His384, and His510.

This sequence belongs to the class-II aminoacyl-tRNA synthetase family. Homodimer. The cofactor is Zn(2+).

The protein localises to the cytoplasm. The catalysed reaction is tRNA(Thr) + L-threonine + ATP = L-threonyl-tRNA(Thr) + AMP + diphosphate + H(+). Functionally, catalyzes the attachment of threonine to tRNA(Thr) in a two-step reaction: L-threonine is first activated by ATP to form Thr-AMP and then transferred to the acceptor end of tRNA(Thr). Also edits incorrectly charged L-seryl-tRNA(Thr). The protein is Threonine--tRNA ligase of Francisella philomiragia subsp. philomiragia (strain ATCC 25017 / CCUG 19701 / FSC 153 / O#319-036).